Consider the following 351-residue polypeptide: Putative glycosyltransferase 45 (351 aa).

The protein belongs to the glycosyltransferase group 1 family.

This is Putative glycosyltransferase 45 (SIFV0045) from Sulfolobus islandicus filamentous virus (isolate Iceland/Hveragerdi) (SIFV).